A 249-amino-acid chain; its full sequence is NAD(P)H-quinone oxidoreductase subunit K (249 aa).

Cys65, Cys66, Cys130, and Cys161 together coordinate [4Fe-4S] cluster.

It belongs to the complex I 20 kDa subunit family. NDH-1 can be composed of about 15 different subunits; different subcomplexes with different compositions have been identified which probably have different functions. Requires [4Fe-4S] cluster as cofactor.

The protein resides in the cellular thylakoid membrane. The catalysed reaction is a plastoquinone + NADH + (n+1) H(+)(in) = a plastoquinol + NAD(+) + n H(+)(out). It carries out the reaction a plastoquinone + NADPH + (n+1) H(+)(in) = a plastoquinol + NADP(+) + n H(+)(out). NDH-1 shuttles electrons from an unknown electron donor, via FMN and iron-sulfur (Fe-S) centers, to quinones in the respiratory and/or the photosynthetic chain. The immediate electron acceptor for the enzyme in this species is believed to be plastoquinone. Couples the redox reaction to proton translocation, and thus conserves the redox energy in a proton gradient. Cyanobacterial NDH-1 also plays a role in inorganic carbon-concentration. The polypeptide is NAD(P)H-quinone oxidoreductase subunit K (Prochlorococcus marinus (strain NATL2A)).